The sequence spans 634 residues: Carbon monoxide dehydrogenase 2 (634 aa).

[4Fe-4S] cluster is bound by residues Cys-44, Cys-53, Cys-56, Cys-61, and Cys-73. The [Ni-4Fe-5S] cluster site is built by His-264, Cys-343, Cys-453, Cys-484, and Cys-525.

The protein belongs to the Ni-containing carbon monoxide dehydrogenase family. Homodimer. Requires [4Fe-4S] cluster as cofactor. [Ni-4Fe-5S] cluster serves as cofactor.

It carries out the reaction CO + 2 oxidized [2Fe-2S]-[ferredoxin] + H2O = 2 reduced [2Fe-2S]-[ferredoxin] + CO2 + 2 H(+). In terms of biological role, CODH oxidizes carbon monoxide coupled, via CooF, to the reduction of a hydrogen cation by a hydrogenase (possibly CooH). The sequence is that of Carbon monoxide dehydrogenase 2 (cooS2) from Methanosarcina mazei (strain ATCC BAA-159 / DSM 3647 / Goe1 / Go1 / JCM 11833 / OCM 88) (Methanosarcina frisia).